The primary structure comprises 228 residues: MQKLKQQVFEANMELPRYGLVTFTWGNVSAIDRERGLVVIKPSGVAYETMKAADMVVVDMSGKVVEGEYRPSSDTATHLELYRRYPSLGGIVHTHSTHATAWAQAGLAIPALGTTHADYFFGDIPCTRGLSEEEVQGEYELNTGKVIIETLGNAEPLHTPGIVVYQHGPFAWGKDAHDAVHNAVVMEEVAKMAWIARGINPQLNHIDSFLMNKHFMRKHGPNAYYGQK.

Residues 26-27, 43-44, and 72-73 contribute to the substrate site; these read GN, SG, and SS. Residues D74, H93, and H95 each coordinate Zn(2+). D118 (proton donor/acceptor) is an active-site residue. H167 lines the Zn(2+) pocket. The active-site Proton donor/acceptor is the Y225.

The protein belongs to the aldolase class II family. AraD/FucA subfamily. Zn(2+) is required as a cofactor.

It carries out the reaction L-ribulose 5-phosphate = D-xylulose 5-phosphate. Its pathway is cofactor degradation; L-ascorbate degradation; D-xylulose 5-phosphate from L-ascorbate: step 4/4. Catalyzes the isomerization of L-ribulose 5-phosphate to D-xylulose 5-phosphate. Is involved in the anaerobic L-ascorbate utilization. The polypeptide is L-ribulose-5-phosphate 4-epimerase UlaF (Escherichia coli (strain K12 / MC4100 / BW2952)).